Consider the following 472-residue polypeptide: Methylenetetrahydrofolate--tRNA-(uracil-5-)-methyltransferase TrmFO (472 aa).

10–15 (GGGLAG) lines the FAD pocket.

Belongs to the MnmG family. TrmFO subfamily. The cofactor is FAD.

The protein localises to the cytoplasm. It catalyses the reaction uridine(54) in tRNA + (6R)-5,10-methylene-5,6,7,8-tetrahydrofolate + NADH + H(+) = 5-methyluridine(54) in tRNA + (6S)-5,6,7,8-tetrahydrofolate + NAD(+). The catalysed reaction is uridine(54) in tRNA + (6R)-5,10-methylene-5,6,7,8-tetrahydrofolate + NADPH + H(+) = 5-methyluridine(54) in tRNA + (6S)-5,6,7,8-tetrahydrofolate + NADP(+). Catalyzes the folate-dependent formation of 5-methyl-uridine at position 54 (M-5-U54) in all tRNAs. The chain is Methylenetetrahydrofolate--tRNA-(uracil-5-)-methyltransferase TrmFO from Mesorhizobium japonicum (strain LMG 29417 / CECT 9101 / MAFF 303099) (Mesorhizobium loti (strain MAFF 303099)).